We begin with the raw amino-acid sequence, 126 residues long: SGSCATKTCWRTLPPFRDIGFALKRKYHSAALVEPVRARRHRRPTFLKLVHVPGGGGYRKPSPTELVFLEQSPNYCESDAAAGSVGTQGRPCNRSSPLAGGCELLCCGRGYNTHIATQAWRCHCKF.

Ser1 is lipidated: O-palmitoleoyl serine; by PORCN. Cys92 and Cys107 are oxidised to a cystine. N-linked (GlcNAc...) asparagine glycosylation occurs at Asn93.

It belongs to the Wnt family. Palmitoleoylation is required for efficient binding to frizzled receptors. Depalmitoleoylation leads to Wnt signaling pathway inhibition.

The protein localises to the secreted. It localises to the extracellular space. The protein resides in the extracellular matrix. In terms of biological role, ligand for members of the frizzled family of seven transmembrane receptors. Probable developmental protein. May be a signaling molecule which affects the development of discrete regions of tissues. Is likely to signal over only few cell diameters. The sequence is that of Protein Wnt-7(II) (WNT-7(II)) from Eptatretus stoutii (Pacific hagfish).